Here is a 190-residue protein sequence, read N- to C-terminus: Probable nicotinate-nucleotide adenylyltransferase (190 aa).

This sequence belongs to the NadD family.

It catalyses the reaction nicotinate beta-D-ribonucleotide + ATP + H(+) = deamido-NAD(+) + diphosphate. It functions in the pathway cofactor biosynthesis; NAD(+) biosynthesis; deamido-NAD(+) from nicotinate D-ribonucleotide: step 1/1. Its function is as follows. Catalyzes the reversible adenylation of nicotinate mononucleotide (NaMN) to nicotinic acid adenine dinucleotide (NaAD). The sequence is that of Probable nicotinate-nucleotide adenylyltransferase from Borrelia turicatae (strain 91E135).